A 220-amino-acid chain; its full sequence is Phosphoenolpyruvate guanylyltransferase (220 aa).

3 residues coordinate phosphoenolpyruvate: threonine 154, glycine 169, and serine 172.

Belongs to the CofC family.

The enzyme catalyses phosphoenolpyruvate + GTP + H(+) = enolpyruvoyl-2-diphospho-5'-guanosine + diphosphate. It functions in the pathway cofactor biosynthesis; coenzyme F420 biosynthesis. Functionally, guanylyltransferase that catalyzes the activation of phosphoenolpyruvate (PEP) as enolpyruvoyl-2-diphospho-5'-guanosine, via the condensation of PEP with GTP. It is involved in the biosynthesis of coenzyme F420, a hydride carrier cofactor. This Mycolicibacterium paratuberculosis (strain ATCC BAA-968 / K-10) (Mycobacterium paratuberculosis) protein is Phosphoenolpyruvate guanylyltransferase.